Here is a 504-residue protein sequence, read N- to C-terminus: Cytochrome P450 3A1 (504 aa).

Cysteine 443 contacts heme.

This sequence belongs to the cytochrome P450 family. Requires heme as cofactor.

It localises to the endoplasmic reticulum membrane. Its subcellular location is the microsome membrane. The enzyme catalyses an organic molecule + reduced [NADPH--hemoprotein reductase] + O2 = an alcohol + oxidized [NADPH--hemoprotein reductase] + H2O + H(+). In terms of biological role, cytochromes P450 are a group of heme-thiolate monooxygenases. In liver microsomes, this enzyme is involved in an NADPH-dependent electron transport pathway. It oxidizes a variety of structurally unrelated compounds, including steroids, fatty acids, and xenobiotics. In Rattus norvegicus (Rat), this protein is Cytochrome P450 3A1 (Cyp3a1).